The primary structure comprises 445 residues: Phosphoglucosamine mutase (445 aa).

S102 functions as the Phosphoserine intermediate in the catalytic mechanism. The Mg(2+) site is built by S102, D241, D243, and D245. S102 bears the Phosphoserine mark.

This sequence belongs to the phosphohexose mutase family. The cofactor is Mg(2+). In terms of processing, activated by phosphorylation.

It catalyses the reaction alpha-D-glucosamine 1-phosphate = D-glucosamine 6-phosphate. Its function is as follows. Catalyzes the conversion of glucosamine-6-phosphate to glucosamine-1-phosphate. The chain is Phosphoglucosamine mutase from Haemophilus influenzae (strain ATCC 51907 / DSM 11121 / KW20 / Rd).